We begin with the raw amino-acid sequence, 283 residues long: Probable protein phosphatase 2C 17 (283 aa).

Residues 32–282 (KYGFSLIKGK…DDISCIVVRF (251 aa)) form the PPM-type phosphatase domain. The Mn(2+) site is built by Asp-69, Gly-70, Asp-234, and Asp-273.

It belongs to the PP2C family. It depends on Mg(2+) as a cofactor. Requires Mn(2+) as cofactor.

It carries out the reaction O-phospho-L-seryl-[protein] + H2O = L-seryl-[protein] + phosphate. The catalysed reaction is O-phospho-L-threonyl-[protein] + H2O = L-threonyl-[protein] + phosphate. In Arabidopsis thaliana (Mouse-ear cress), this protein is Probable protein phosphatase 2C 17.